A 710-amino-acid polypeptide reads, in one-letter code: Nucleolin (710 aa).

The tract at residues 1 to 303 (MVKLAKAGKN…KKQKVEGTEP (303 aa)) is disordered. Residues lysine 9, lysine 15, and lysine 16 each carry the N6-acetyllysine modification. Residues 24 to 43 (VEEDSEDEEMSEDEEDDSSG) show a composition bias toward acidic residues. Serine 28, serine 34, serine 41, and serine 42 each carry phosphoserine. A compositionally biased stretch (low complexity) spans 56–107 (AAATSAKKVVVSPTKKVAVATPAKKAAVTPGKKAAATPAKKTVTPAKAVTTP). Repeat unit 1 spans residues 58-65 (ATSAKKVV). Positions 58–135 (ATSAKKVVVS…GAAIPAKGAK (78 aa)) are 8 X 8 AA tandem repeats of X-T-P-X-K-K-X-X. A Phosphoserine modification is found at serine 67. 4 positions are modified to phosphothreonine: threonine 69, threonine 76, threonine 84, and threonine 92. Tandem repeats lie at residues 75–82 (ATPAKKAA), 83–90 (VTPGKKAA), and 91–98 (ATPAKKTV). Position 96 is an N6-acetyllysine (lysine 96). Threonine 99 is modified (phosphothreonine). One copy of the 5; truncated repeat lies at 99–104 (TPAKAV). Lysine 102 is modified (N6-acetyllysine). Repeat 6 spans residues 105–112 (TTPGKKGA). Threonine 106 is subject to Phosphothreonine. An N6-acetyllysine modification is found at lysine 109. Threonine 113 carries the phosphothreonine modification. Lysine 116 carries the post-translational modification N6-acetyllysine. Tandem repeats lie at residues 120–127 (ATPGKKGA) and 128–135 (AIPAKGAK). At threonine 121 the chain carries Phosphothreonine. Residues 122–137 (PGKKGAAIPAKGAKNG) are compositionally biased toward low complexity. Position 124 is an N6-acetyllysine (lysine 124). A phosphoserine mark is found at serine 145 and serine 153. Residues 145 to 171 (SDEEEDDDSEEDEEDDEDEDEDEDEIE) are compositionally biased toward acidic residues. Positions 172–183 (PAAMKAAAAAPA) are enriched in low complexity. Phosphoserine occurs at positions 184 and 206. Residues 184 to 211 (SEDEDDEDDEDDEDDDDDEEDDSEEEAM) show a composition bias toward acidic residues. Position 214 is a phosphothreonine (threonine 214). Residues 234–272 (EDEDEEEDDEDEDDDDDEDDEDDDDEDDEEEEEEEEEEP) show a composition bias toward acidic residues. Basic and acidic residues predominate over residues 273–300 (VKEAPGKRKKEMAKQKAAPEAKKQKVEG). Lysine 297 participates in a covalent cross-link: Glycyl lysine isopeptide (Lys-Gly) (interchain with G-Cter in SUMO1); alternate. Residue lysine 297 forms a Glycyl lysine isopeptide (Lys-Gly) (interchain with G-Cter in SUMO2); alternate linkage. Threonine 301 is subject to Phosphothreonine. RRM domains are found at residues 307 to 383 (FNLF…KPKG) and 393 to 466 (RTLL…YTGE). Lysine 318 carries the post-translational modification N6-acetyllysine. A Glycyl lysine isopeptide (Lys-Gly) (interchain with G-Cter in SUMO1); alternate cross-link involves residue lysine 324. Lysine 324 participates in a covalent cross-link: Glycyl lysine isopeptide (Lys-Gly) (interchain with G-Cter in SUMO2); alternate. N6-acetyllysine is present on lysine 348. Serine 356 carries the post-translational modification Phosphoserine. Phosphothreonine is present on threonine 367. Lysine 370 participates in a covalent cross-link: Glycyl lysine isopeptide (Lys-Gly) (interchain with G-Cter in SUMO2). Residue lysine 377 forms a Glycyl lysine isopeptide (Lys-Gly) (interchain with G-Cter in SUMO2); alternate linkage. An N6-acetyllysine; alternate modification is found at lysine 377. An N6-acetyllysine mark is found at lysine 398 and lysine 403. A Phosphothreonine modification is found at threonine 405. An N6-acetyllysine mark is found at lysine 427 and lysine 444. Phosphoserine is present on residues serine 458 and serine 460. Residues lysine 467 and lysine 477 each carry the N6-acetyllysine modification. One can recognise an RRM 3 domain in the interval 486–560 (KTLVLSNLSY…RAIRLELQGP (75 aa)). Lysine 513 is covalently cross-linked (Glycyl lysine isopeptide (Lys-Gly) (interchain with G-Cter in SUMO2); alternate). Residue lysine 513 is modified to N6-acetyllysine; alternate. At lysine 521 the chain carries N6-acetyllysine. Serine 563 carries the post-translational modification Phosphoserine. Lysine 572 carries the post-translational modification N6-acetyllysine. One can recognise an RRM 4 domain in the interval 572-647 (KTLFVKGLSE…NKVTLDWAKP (76 aa)). Lysine 577 is covalently cross-linked (Glycyl lysine isopeptide (Lys-Gly) (interchain with G-Cter in SUMO2); alternate). At lysine 577 the chain carries N6-acetyllysine; alternate. A Phosphoserine modification is found at serine 580. Lysine 589 is covalently cross-linked (Glycyl lysine isopeptide (Lys-Gly) (interchain with G-Cter in SUMO1); alternate). Residue lysine 589 forms a Glycyl lysine isopeptide (Lys-Gly) (interchain with G-Cter in SUMO2); alternate linkage. Serine 591 and serine 619 each carry phosphoserine. Lysine 624 participates in a covalent cross-link: Glycyl lysine isopeptide (Lys-Gly) (interchain with G-Cter in SUMO2). Positions 640–710 (VTLDWAKPKG…KPQGKKTKFE (71 aa)) are disordered. N6-acetyllysine is present on lysine 646. Positions 650-696 (EGGFGGRGGGRGGFGGRGGGRGGRGGFGGRGRGGFGGRGGFRGGRGG) are enriched in gly residues. Asymmetric dimethylarginine occurs at positions 656, 660, 666, 670, 673, 679, 681, 687, and 691. An Asymmetric dimethylarginine; alternate modification is found at arginine 694. Arginine 694 carries the omega-N-methylarginine; alternate modification. A compositionally biased stretch (basic and acidic residues) spans 697 to 710 (GGDHKPQGKKTKFE).

As to quaternary structure, identified in a IGF2BP1-dependent mRNP granule complex containing untranslated mRNAs. Component of the SWAP complex that consists of NPM1, NCL/nucleolin, PARP1 and SWAP70. Component of a complex which is at least composed of HTATSF1/Tat-SF1, the P-TEFb complex components CDK9 and CCNT1, RNA polymerase II, SUPT5H, and NCL/nucleolin. Interacts with AICDA. Interacts with APTX. Interacts with C1QBP. Interacts with ERBB4. Interacts (via C-terminus) with FMR1 isoform 6 (via N-terminus). Interacts with GZF1; this interaction is important for nucleolar localization of GZF1. Interacts with NSUN2. Interacts with NVL. Interacts (via N-terminus domain) with SETX. Interacts (via RRM1 and C-terminal RRM4/Arg/Gly-rich domains) with TERT; the interaction is important for nucleolar localization of TERT. Interacts with WDR46. Interacts with ZFP36. Interacts with LRRC34. Interacts with RRP1B. Interacts with HNRNPU; this interaction occurs during mitosis. Interacts with RIOK1; RIOK1 recruits NCL to PRMT5 for symmetrically methylation. Interacts with ZBTB7B. Interacts with MDK; this interaction promotes NCL clustering and lateral movements of this complex into lipid rafts leading to MDK internalization. Interacts with HDGF (isoform 1). Interacts with ALKBH2. Interacts with IGFBP5; this interaction is necessary for IGFBP5 localization to the nucleus. Interacts with DDX24 (when ubiquitinated); this interaction may be important during ribosome biogenesis. In terms of processing, some glutamate residues are glycylated by TTLL8. This modification occurs exclusively on glutamate residues and results in a glycine chain on the gamma-carboxyl group. Symmetrically methylated by PRMT5.

The protein resides in the nucleus. The protein localises to the nucleolus. It localises to the cytoplasm. Its function is as follows. Nucleolin is the major nucleolar protein of growing eukaryotic cells. It is found associated with intranucleolar chromatin and pre-ribosomal particles. It induces chromatin decondensation by binding to histone H1. It is thought to play a role in pre-rRNA transcription and ribosome assembly. May play a role in the process of transcriptional elongation. Binds RNA oligonucleotides with 5'-UUAGGG-3' repeats more tightly than the telomeric single-stranded DNA 5'-TTAGGG-3' repeats. This is Nucleolin (NCL) from Homo sapiens (Human).